The primary structure comprises 225 residues: U2 small nuclear ribonucleoprotein B'' (225 aa).

One can recognise an RRM 1 domain in the interval 7-86 (HTIYINNMND…KPMRIQYAKT (80 aa)). The interval 100-144 (DKEKKKEKKKAKTMEQAAAAANKKPGQGTPNAANTQGTAAPNPQV) is disordered. K111 carries the N6-acetyllysine; alternate modification. K111 is covalently cross-linked (Glycyl lysine isopeptide (Lys-Gly) (interchain with G-Cter in SUMO2); alternate). Residues 113 to 123 (MEQAAAAANKK) are compositionally biased toward low complexity. Positions 127 to 140 (GTPNAANTQGTAAP) are enriched in polar residues. Y151 carries the phosphotyrosine modification. Positions 151–225 (YILFLNNLPE…HAMKITYAKK (75 aa)) constitute an RRM 2 domain.

The protein belongs to the RRM U1 A/B'' family. In terms of assembly, identified in the spliceosome B complex. Identified in the spliceosome C complex. Present in a spliceosome complex assembled in vitro, and composed of SNRPB2, HPRP8BP and CRNKL1. Contributes to the binding of stem loop IV of U2 snRNA with SNRPP1.

Its subcellular location is the nucleus. Functionally, involved in pre-mRNA splicing as component of the spliceosome. Associated with sn-RNP U2, where it contributes to the binding of stem loop IV of U2 snRNA. The sequence is that of U2 small nuclear ribonucleoprotein B'' (Snrpb2) from Mus musculus (Mouse).